A 207-amino-acid chain; its full sequence is Protein dct-5 (207 aa).

The helical transmembrane segment at 13-33 (LNFILSIMNSYLFVLIVSIGF) threads the bilayer.

The protein resides in the membrane. Functionally, acts downstream of daf-16/foxo to suppress tumors induced by disruption of gld-1. Potentially a direct target of daf-15/foxo. This is Protein dct-5 (dct-5) from Caenorhabditis elegans.